The following is a 497-amino-acid chain: Argininosuccinate lyase (497 aa).

The protein belongs to the lyase 1 family. Argininosuccinate lyase subfamily.

The protein resides in the cytoplasm. The enzyme catalyses 2-(N(omega)-L-arginino)succinate = fumarate + L-arginine. Its pathway is amino-acid biosynthesis; L-arginine biosynthesis; L-arginine from L-ornithine and carbamoyl phosphate: step 3/3. This is Argininosuccinate lyase from Clavibacter michiganensis subsp. michiganensis (strain NCPPB 382).